We begin with the raw amino-acid sequence, 559 residues long: Glucose-6-phosphate isomerase (559 aa).

Catalysis depends on Glu-363, which acts as the Proton donor. Active-site residues include His-394 and Lys-523.

This sequence belongs to the GPI family.

The protein localises to the cytoplasm. It carries out the reaction alpha-D-glucose 6-phosphate = beta-D-fructose 6-phosphate. The protein operates within carbohydrate biosynthesis; gluconeogenesis. It participates in carbohydrate degradation; glycolysis; D-glyceraldehyde 3-phosphate and glycerone phosphate from D-glucose: step 2/4. In terms of biological role, catalyzes the reversible isomerization of glucose-6-phosphate to fructose-6-phosphate. This chain is Glucose-6-phosphate isomerase, found in Bartonella quintana (strain Toulouse) (Rochalimaea quintana).